The sequence spans 141 residues: HTH-type transcriptional repressor NsrR (141 aa).

The 128-residue stretch at 2-129 (QLTSFTDYGL…DQYTLADMVK (128 aa)) folds into the HTH rrf2-type domain. A DNA-binding region (H-T-H motif) is located at residues 28 to 51 (ISEVTEVYGVSRNHMVKIINQLSR). [2Fe-2S] cluster contacts are provided by C91, C96, and C102.

The cofactor is [2Fe-2S] cluster.

Its function is as follows. Nitric oxide-sensitive repressor of genes involved in protecting the cell against nitrosative stress. May require iron for activity. This is HTH-type transcriptional repressor NsrR from Pectobacterium atrosepticum (strain SCRI 1043 / ATCC BAA-672) (Erwinia carotovora subsp. atroseptica).